The sequence spans 689 residues: Glycine--tRNA ligase beta subunit (689 aa).

This sequence belongs to the class-II aminoacyl-tRNA synthetase family. Tetramer of two alpha and two beta subunits.

The protein localises to the cytoplasm. The enzyme catalyses tRNA(Gly) + glycine + ATP = glycyl-tRNA(Gly) + AMP + diphosphate. The sequence is that of Glycine--tRNA ligase beta subunit from Shewanella halifaxensis (strain HAW-EB4).